The primary structure comprises 280 residues: Bifunctional protein FolD (280 aa).

Residues 164-166, serine 189, and valine 230 contribute to the NADP(+) site; that span reads GRS.

It belongs to the tetrahydrofolate dehydrogenase/cyclohydrolase family. Homodimer.

The enzyme catalyses (6R)-5,10-methylene-5,6,7,8-tetrahydrofolate + NADP(+) = (6R)-5,10-methenyltetrahydrofolate + NADPH. The catalysed reaction is (6R)-5,10-methenyltetrahydrofolate + H2O = (6R)-10-formyltetrahydrofolate + H(+). The protein operates within one-carbon metabolism; tetrahydrofolate interconversion. Its function is as follows. Catalyzes the oxidation of 5,10-methylenetetrahydrofolate to 5,10-methenyltetrahydrofolate and then the hydrolysis of 5,10-methenyltetrahydrofolate to 10-formyltetrahydrofolate. This chain is Bifunctional protein FolD, found in Geotalea uraniireducens (strain Rf4) (Geobacter uraniireducens).